The chain runs to 142 residues: Large-conductance mechanosensitive channel (142 aa).

Transmembrane regions (helical) follow at residues 14 to 34, 38 to 58, and 82 to 102; these read VMDL…VDSV, LVMP…NYFL, and GNFI…FLLI.

Belongs to the MscL family. Homopentamer.

It localises to the cell inner membrane. Functionally, channel that opens in response to stretch forces in the membrane lipid bilayer. May participate in the regulation of osmotic pressure changes within the cell. The sequence is that of Large-conductance mechanosensitive channel from Rhizobium meliloti (strain 1021) (Ensifer meliloti).